The chain runs to 274 residues: Kit ligand (274 aa).

Positions 1-25 (MKKTQTWIITCIYLQLLLFNPLVHT) are cleaved as a signal peptide. Glutamine 26 is subject to Pyrrolidone carboxylic acid. At 26–215 (QGICSNRVTD…SNSIEDSSLQ (190 aa)) the chain is on the extracellular side. 2 disulfides stabilise this stretch: cysteine 29–cysteine 114 and cysteine 68–cysteine 164. Residues asparagine 90, asparagine 145, and asparagine 196 are each glycosylated (N-linked (GlcNAc...) asparagine). Residues 216–238 (WAAVALPAFFSLVIGFAFGAFYW) form a helical membrane-spanning segment. Over 239–274 (KKKQPNLTRTVENRQINEEDNEISMLQEKEREFQEV) the chain is Cytoplasmic.

Belongs to the SCF family. As to quaternary structure, homodimer, non-covalently linked. A soluble form is produced by proteolytic processing of isoform 1 in the extracellular domain.

It localises to the cell membrane. The protein localises to the cytoplasm. It is found in the cytoskeleton. Its subcellular location is the cell projection. The protein resides in the lamellipodium. It localises to the filopodium. The protein localises to the secreted. In terms of biological role, stimulates the proliferation of mast cells. Able to augment the proliferation of both myeloid and lymphoid hematopoietic progenitors in bone marrow culture. Also mediates cell-cell adhesion. Acts synergistically with other cytokines, probably interleukins. The polypeptide is Kit ligand (KITLG) (Bos taurus (Bovine)).